The following is a 379-amino-acid chain: Copper-containing nitrite reductase (379 aa).

A signal peptide (tat-type signal) is located at residues 1 to 32; it reads MSEQFRLTRRSMLAGAAVAGALAPVVTSVAHA. Plastocyanin-like domains follow at residues 33–214 and 215–379; these read EGGG…YDKV and YYVG…PTSG. Cu cation-binding residues include His-134, His-139, His-174, Cys-175, His-184, Met-189, and His-345.

It belongs to the multicopper oxidase family. Homotrimer. Requires Cu(2+) as cofactor. Cu(+) serves as cofactor. FAD is required as a cofactor. In terms of processing, predicted to be exported by the Tat system. The position of the signal peptide cleavage has not been experimentally proven.

The protein localises to the periplasm. It carries out the reaction nitric oxide + Fe(III)-[cytochrome c] + H2O = Fe(II)-[cytochrome c] + nitrite + 2 H(+). Its pathway is nitrogen metabolism; nitrate reduction (denitrification); dinitrogen from nitrate: step 2/4. This chain is Copper-containing nitrite reductase (nirU), found in Neorhizobium galegae (Rhizobium galegae).